We begin with the raw amino-acid sequence, 1255 residues long: Kinesin-related protein 7 (1255 aa).

The tract at residues 1–26 is disordered; that stretch reads MESPVVEGNSGEVATPTLPQPPTPVS. The 322-residue stretch at 28–349 folds into the Kinesin motor domain; the sequence is NIRVVCRVRP…LQFGTRAKTI (322 aa). 107–114 contributes to the ATP binding site; that stretch reads GQTASGKT. Low complexity-rich tracts occupy residues 454 to 491, 545 to 563, and 583 to 603; these read NNNN…QQEN, NNNN…DSDG, and HNIN…NSNS. Disordered regions lie at residues 454-503, 530-564, 579-628, 661-686, 795-864, and 915-934; these read NNNN…NSSF, GNIS…SDGY, DLND…MDVN, ENEQ…SNAT, EEGS…TKSI, and ISIK…TSIK. Positions 608-628 are enriched in polar residues; that stretch reads VSTSYITSSPNLSPSKSMDVN. Over residues 813–834 the composition is skewed to acidic residues; that stretch reads GDDDDEENEDNENEDVIVDSDE. The span at 915–932 shows a compositional bias: low complexity; that stretch reads ISIKSNKEPSPSSSTTTS. Residues 945–965 traverse the membrane as a helical segment; that stretch reads IIFTIILTITLVSSSLLCLYL. A coiled-coil region spans residues 1088-1223; sequence NYITKIDQLS…QELEDAPIAL (136 aa).

The protein belongs to the TRAFAC class myosin-kinesin ATPase superfamily. Kinesin family.

The protein localises to the nucleus membrane. The protein resides in the cytoplasm. It localises to the cytoskeleton. Microtubule-associated force-producing protein that plays a role in organelle transport. Its motor activity is directed toward the microtubule's plus end. May be involved in cell motility or cell differentiation during prestalk formation. This is Kinesin-related protein 7 (kif7) from Dictyostelium discoideum (Social amoeba).